Here is a 308-residue protein sequence, read N- to C-terminus: Ceramide synthase 1 LOH3 (308 aa).

The next 6 helical transmembrane spans lie at 25-45 (VLPL…RFVF), 82-102 (CVYY…EPWF), 128-148 (LLYM…VFWE), 154-174 (FGVS…SYVC), 213-233 (FILF…FWIL), and 258-278 (YMFN…WVLM). A TLC domain is found at 73 to 287 (RKFKESAWKC…MYRMLVKQIQ (215 aa)). S298 and S300 each carry phosphoserine.

In terms of tissue distribution, expressed ubiquitously at low levels. Not observed in pollen.

The protein localises to the endoplasmic reticulum membrane. The enzyme catalyses (4R)-hydroxysphinganine + a fatty acyl-CoA = an N-acyl-(4R)-4-hydroxysphinganine + CoA + H(+). It catalyses the reaction a sphingoid base + tetracosanoyl-CoA = an N-tetracosanoyl-sphingoid base + CoA + H(+). The catalysed reaction is (4R)-hydroxysphinganine + hexadecanoyl-CoA = N-hexadecanoyl-(4R)-hydroxysphinganine + CoA + H(+). It carries out the reaction (4R)-hydroxysphinganine + octadecanoyl-CoA = N-octadecanoyl-(4R)-hydroxysphinganine + CoA + H(+). The enzyme catalyses (4R)-hydroxysphinganine + eicosanoyl-CoA = N-eicosanoyl-(4R)-hydroxysphinganine + CoA + H(+). It catalyses the reaction docosanoyl-CoA + (4R)-hydroxysphinganine = N-docosanoyl-(4R)-hydroxysphinganine + CoA + H(+). The catalysed reaction is hexacosanoyl-CoA + (4R)-hydroxysphinganine = N-hexacosanoyl-(4R)-hydroxysphinganine + CoA + H(+). It carries out the reaction tetracosanoyl-CoA + (4R)-hydroxysphinganine = N-tetracosanoyl-(4R)-hydroxysphinganine + CoA + H(+). The enzyme catalyses tetracosanoyl-CoA + sphing-4-enine = N-tetracosanoyl-sphing-4-enine + CoA + H(+). It catalyses the reaction sphinga-(4E,8Z)-dienine + tetracosanoyl-CoA = N-tetracosanoylsphinga-(4E,8Z)-dienine + CoA + H(+). The catalysed reaction is sphinga-(4E,8E)-dienine + tetracosanoyl-CoA = N-tetracosanoylsphinga-(4E,8E)-dienine + CoA + H(+). It carries out the reaction (4R)-hydroxysphing-(8Z)-enine + tetracosanoyl-CoA = N-tetracosanoyl-(4R)-hydroxysphing-(8Z)-enine + CoA + H(+). The enzyme catalyses (4R)-hydroxysphing-(8E)-enine + tetracosanoyl-CoA = N-tetracosanoyl-(4R)-hydroxysphing-(8E)-enine + CoA + H(+). It participates in sphingolipid metabolism. Inhibited by the mycotoxin fumonisin B(1), a sphingosine analog mycotoxins produced by pathogenic fungi. Repressed by divalent cation such as magnesium Mg(2+), copper Cu(2+), zinc Zn(2+), manganese Mn(2+), calcium Ca(2+) and cobalt Co(2+). Essential for plant growth, promotes cell division in root meristems. Catalyzes the biosynthesis of ceramide sphingolipids with C(16) to C(28) fatty acids, structural membrane lipids involved in membrane trafficking (e.g. early endosomes) and cell polarity (e.g. polar auxin transport related proteins); active on a broad substrate spectrum, both regarding chain lengths of fatty acids and the sphingoid base, such as long-chain base (LCB) phytosphingosine (t18:0). Mediates resistance to sphinganine-analog mycotoxins (SAMs, e.g. fumonisin B(1)) by restoring the sphingolipid biosynthesis. Could salvage the transport of GPI-anchored proteins from the endoplasmic reticulum to the Golgi apparatus in ceramides-depleted cells after SAM exposure. Contributes to hypoxic conditions tolerance (e.g. submergences), especially in the dark, by promoting the formation of very-long-chain (VLC) ceramide species (22:1, 24:1 and 26:1) and of VLC unsaturated ceramides, which are modulating CTR1-mediated ethylene signaling leading to endoplasmic reticulum (ER)-to-nucleus translocation of EIN2 and EIN3. The polypeptide is Ceramide synthase 1 LOH3 (Arabidopsis thaliana (Mouse-ear cress)).